The chain runs to 794 residues: Ent-copalyl diphosphate synthase 2 (794 aa).

A chloroplast-targeting transit peptide spans 1 to 35 (MSSSSNVTSLPRLTTAGGVFPREMVRVHSSCNILR). Lys-238 provides a ligand contact to substrate. Residues Asp-369 and Asp-371 each coordinate Mg(2+). Positions 369-372 (DVDD) match the DXDD motif motif. Lys-455 provides a ligand contact to substrate.

The protein belongs to the terpene synthase family. Tpsc subfamily. The cofactor is Mg(2+). In terms of tissue distribution, expressed in leaves.

The protein localises to the plastid. It localises to the chloroplast. The catalysed reaction is (2E,6E,10E)-geranylgeranyl diphosphate = ent-copalyl diphosphate. It participates in secondary metabolite biosynthesis; terpenoid biosynthesis. Involved in the biosynthesis of ent-kaurene diterpenoids natural products such as oridonin, miltiradiene, eriocalyxin B and nezukol, known to exhibit antitumor, anti-inflammatory and antibacterial activities. Catalyzes the conversion of (2E,6E,10E)-geranylgeranyl diphosphate (GGPP) to ent-copalyl diphosphate (ent-CPP). The sequence is that of Ent-copalyl diphosphate synthase 2 from Isodon eriocalyx (Plectranthus eriocalyx).